A 334-amino-acid chain; its full sequence is Aspartate carbamoyltransferase catalytic subunit (334 aa).

Arg71 and Thr72 together coordinate carbamoyl phosphate. Residue Lys99 participates in L-aspartate binding. 3 residues coordinate carbamoyl phosphate: Arg121, His151, and Gln154. Residues Arg184 and Arg239 each contribute to the L-aspartate site. Residues Gly280 and Pro281 each contribute to the carbamoyl phosphate site.

The protein belongs to the aspartate/ornithine carbamoyltransferase superfamily. ATCase family. In terms of assembly, heterododecamer (2C3:3R2) of six catalytic PyrB chains organized as two trimers (C3), and six regulatory PyrI chains organized as three dimers (R2).

It catalyses the reaction carbamoyl phosphate + L-aspartate = N-carbamoyl-L-aspartate + phosphate + H(+). It functions in the pathway pyrimidine metabolism; UMP biosynthesis via de novo pathway; (S)-dihydroorotate from bicarbonate: step 2/3. Functionally, catalyzes the condensation of carbamoyl phosphate and aspartate to form carbamoyl aspartate and inorganic phosphate, the committed step in the de novo pyrimidine nucleotide biosynthesis pathway. This Pseudomonas fluorescens (strain Pf0-1) protein is Aspartate carbamoyltransferase catalytic subunit.